Consider the following 95-residue polypeptide: Integration host factor subunit beta (95 aa).

The interval 59-95 is disordered; sequence RVGRNPKTGQSVRLDGKFVPHFKPGKELRDRVNEDES. Basic and acidic residues predominate over residues 72–95; it reads LDGKFVPHFKPGKELRDRVNEDES.

It belongs to the bacterial histone-like protein family. As to quaternary structure, heterodimer of an alpha and a beta chain.

In terms of biological role, this protein is one of the two subunits of integration host factor, a specific DNA-binding protein that functions in genetic recombination as well as in transcriptional and translational control. This chain is Integration host factor subunit beta, found in Ectopseudomonas mendocina (strain ymp) (Pseudomonas mendocina).